Consider the following 388-residue polypeptide: Na(+)/H(+) antiporter NhaA (388 aa).

Over 1–11 (MKHLHRFFSSD) the chain is Cytoplasmic. The chain crosses the membrane as a helical span at residues 12–31 (ASGGIILIIAAVLAMIMANS). The Periplasmic portion of the chain corresponds to 32 to 58 (GATSGWYHDFLETPVQLRVGTLEINKN). A helical membrane pass occupies residues 59-80 (MLLWINDALMAVFFLLVGLEVK). Topologically, residues 81-96 (RELMQGSLASLRQAAF) are cytoplasmic. Residues 97-116 (PVIAAIGGMIVPALLYLAFN) form a helical membrane-spanning segment. The Periplasmic portion of the chain corresponds to 117 to 122 (YADPIT). The chain crosses the membrane as a helical span at residues 123-130 (REGWAIPA). The Cytoplasmic segment spans residues 131–154 (ATDIAFALGVLALLGSRVPLALKI). A helical transmembrane segment spans residues 155–176 (FLMALAIIDDLGAIIIIALFYT). Over 177 to 180 (NDLS) the chain is Periplasmic. The helical transmembrane segment at 181–200 (MASLGVAAVAIAVLAVLNLC) threads the bilayer. Residues 201-204 (GVRR) are Cytoplasmic-facing. A helical membrane pass occupies residues 205–222 (TGVYILVGVVLWTAVLKS). G223 is a topological domain (periplasmic). A helical transmembrane segment spans residues 224 to 236 (VHATLAGVIVGFF). Residues 237 to 253 (IPLKEKHGRSPAKRLEH) are Cytoplasmic-facing. A helical transmembrane segment spans residues 254 to 272 (VLHPWVAYLILPLFAFANA). Residues 273-286 (GVSLQGVTLEGLTS) are Periplasmic-facing. The chain crosses the membrane as a helical span at residues 287-310 (ILPLGIIAGLLIGKPLGISLFCWL). At 311 to 339 (ALRLKLAHLPEGTTYQQIMAVGILCGIGF) the chain is on the cytoplasmic side. Residues 340 to 350 (TMSIFIASLAF) form a helical membrane-spanning segment. The Periplasmic portion of the chain corresponds to 351–357 (GSVDPEL). Residues 358-380 (INWAKLGILVGSISSAVIGYSWL) traverse the membrane as a helical segment. Over 381–388 (RVRLRPSV) the chain is Cytoplasmic.

It belongs to the NhaA Na(+)/H(+) (TC 2.A.33) antiporter family.

The protein resides in the cell inner membrane. It catalyses the reaction Na(+)(in) + 2 H(+)(out) = Na(+)(out) + 2 H(+)(in). Its function is as follows. Na(+)/H(+) antiporter that extrudes sodium in exchange for external protons. This Escherichia coli O6:K15:H31 (strain 536 / UPEC) protein is Na(+)/H(+) antiporter NhaA.